Consider the following 258-residue polypeptide: Phosphoribosylaminoimidazole-succinocarboxamide synthase (258 aa).

Belongs to the SAICAR synthetase family.

The catalysed reaction is 5-amino-1-(5-phospho-D-ribosyl)imidazole-4-carboxylate + L-aspartate + ATP = (2S)-2-[5-amino-1-(5-phospho-beta-D-ribosyl)imidazole-4-carboxamido]succinate + ADP + phosphate + 2 H(+). The protein operates within purine metabolism; IMP biosynthesis via de novo pathway; 5-amino-1-(5-phospho-D-ribosyl)imidazole-4-carboxamide from 5-amino-1-(5-phospho-D-ribosyl)imidazole-4-carboxylate: step 1/2. The chain is Phosphoribosylaminoimidazole-succinocarboxamide synthase from Rhizorhabdus wittichii (strain DSM 6014 / CCUG 31198 / JCM 15750 / NBRC 105917 / EY 4224 / RW1) (Sphingomonas wittichii).